Reading from the N-terminus, the 521-residue chain is D-aminoacyl-tRNA deacylase (521 aa).

Disordered regions lie at residues 323–353 (AVGT…SEDS) and 499–521 (VFST…SSSS). Residues 343–353 (VDAERTESEDS) are compositionally biased toward basic and acidic residues. Over residues 501–521 (STSSSSSSSSSSSSSSSSSSS) the composition is skewed to low complexity.

Belongs to the DtdA deacylase family. Monomer. The cofactor is Zn(2+).

It carries out the reaction a D-aminoacyl-tRNA + H2O = a tRNA + a D-alpha-amino acid + H(+). The enzyme catalyses glycyl-tRNA(Ala) + H2O = tRNA(Ala) + glycine + H(+). Functionally, D-aminoacyl-tRNA deacylase with broad substrate specificity. By recycling D-aminoacyl-tRNA to D-amino acids and free tRNA molecules, this enzyme counteracts the toxicity associated with the formation of D-aminoacyl-tRNA entities in vivo. The sequence is that of D-aminoacyl-tRNA deacylase from Haloquadratum walsbyi (strain DSM 16790 / HBSQ001).